A 1009-amino-acid chain; its full sequence is Protein naked cuticle (1009 aa).

Polar residues-rich tracts occupy residues 68 to 83 (IITTPPGNASGSASNK) and 121 to 130 (LPQDMSSSGS). The disordered stretch occupies residues 68 to 166 (IITTPPGNAS…QQQTAAAATG (99 aa)). Positions 152 to 166 (QQQQQQQQTAAAATG) are enriched in low complexity. The segment at 206 to 282 (EFTCDVSVEG…TVSPEGKSKS (77 aa)) is interaction with dsh. The 37-residue stretch at 217-253 (KSSQPLQFSFTFYDLDGHHGKITKDDIVGIVYTIYES) folds into the EF-hand domain. Disordered regions lie at residues 328–433 (MSKQ…QQQL), 456–479 (AGNEATVPDCPSSHRQLHHQRQQD), and 515–580 (GNDS…QQQR). A compositionally biased stretch (basic residues) spans 349 to 359 (RRQHRYRPRKL). Residues 370 to 387 (NSEKEKERERERERESHA) show a composition bias toward basic and acidic residues. Over residues 403 to 414 (KSHHHHHHHGRY) the composition is skewed to basic residues. Residues 515–525 (GNDSGNWQNRH) are compositionally biased toward polar residues. Low complexity-rich tracts occupy residues 526-535 (LQQSLQQQPQ) and 570-580 (HQQLQQQQQQR). Residues 584 to 613 (ECWKSALNRNDLISIIRESMEKNRLCFQLN) form a required for nuclear localization and inhibition of Wnt signaling region. Disordered regions lie at residues 619–662 (NVSP…SPLS), 773–799 (SAAHSPPPTPSNVATVQPIPKKSHNQK), 835–899 (LQQK…SAGS), and 955–982 (TESGGKQQQQQALEADEGQEQEVELDTS). Low complexity-rich tracts occupy residues 624-638 (RQPAAQQQQQQQRQR) and 653-662 (SPAAPQSPLS). Residues 843 to 857 (RRHRHKQQQQQHHHQ) are compositionally biased toward basic residues. Residues 858–875 (QQQQQQQQQNQQQQQQQQ) are compositionally biased toward low complexity. A compositionally biased stretch (acidic residues) spans 968–979 (EADEGQEQEVEL).

This sequence belongs to the NKD family. Interacts with dsh.

The protein resides in the cell membrane. It is found in the cytoplasm. The protein localises to the nucleus. In terms of biological role, cell autonomous antagonist of the canonical Wnt signaling pathway. May activate a second Wnt signaling pathway that controls planar cell polarity. Required for neuroblast specification. This is Protein naked cuticle from Drosophila pseudoobscura pseudoobscura (Fruit fly).